A 31-amino-acid polypeptide reads, in one-letter code: Photosystem II reaction center protein T (31 aa).

A helical transmembrane segment spans residues 3-23; sequence SVAYILVLTMALSVIFFAIAF.

It belongs to the PsbT family. As to quaternary structure, PSII is composed of 1 copy each of membrane proteins PsbA, PsbB, PsbC, PsbD, PsbE, PsbF, PsbH, PsbI, PsbJ, PsbK, PsbL, PsbM, PsbT, PsbX, PsbY, PsbZ, Psb30/Ycf12, peripheral proteins PsbO, CyanoQ (PsbQ), PsbU, PsbV and a large number of cofactors. It forms dimeric complexes.

It localises to the cellular thylakoid membrane. Found at the monomer-monomer interface of the photosystem II (PS II) dimer, plays a role in assembly and dimerization of PSII. PSII is a light-driven water plastoquinone oxidoreductase, using light energy to abstract electrons from H(2)O, generating a proton gradient subsequently used for ATP formation. In Microcystis aeruginosa (strain NIES-843 / IAM M-2473), this protein is Photosystem II reaction center protein T.